The sequence spans 180 residues: Beta-lactoglobulin-1 (180 aa).

The first 18 residues, 1 to 18, serve as a signal peptide directing secretion; sequence MKCLLLALGLALMCGIQA. 2 cysteine pairs are disulfide-bonded: C84–C178 and C124–C137.

The protein belongs to the calycin superfamily. Lipocalin family. In terms of assembly, monomer.

The protein resides in the secreted. Lactoglobulin is the primary component of whey, it binds retinol and is probably involved in the transport of that molecule. The chain is Beta-lactoglobulin-1 (LGB1) from Equus caballus (Horse).